The primary structure comprises 473 residues: Glutamate--tRNA ligase 2 (473 aa).

The 'HIGH' region motif lies at 11–21 (PSPTGYLHIGG). Residues 113-133 (KARAEGRPPRYDGRWRDRDPS) show a composition bias toward basic and acidic residues. The segment at 113–136 (KARAEGRPPRYDGRWRDRDPSEAP) is disordered. The 'KMSKS' region motif lies at 240–244 (KLSKR). Lys-243 lines the ATP pocket.

The protein belongs to the class-I aminoacyl-tRNA synthetase family. Glutamate--tRNA ligase type 1 subfamily. In terms of assembly, monomer.

It is found in the cytoplasm. The enzyme catalyses tRNA(Glu) + L-glutamate + ATP = L-glutamyl-tRNA(Glu) + AMP + diphosphate. Its function is as follows. Catalyzes the attachment of glutamate to tRNA(Glu) in a two-step reaction: glutamate is first activated by ATP to form Glu-AMP and then transferred to the acceptor end of tRNA(Glu). This chain is Glutamate--tRNA ligase 2, found in Brucella suis biovar 1 (strain 1330).